We begin with the raw amino-acid sequence, 244 residues long: Tetraspanin-2A (244 aa).

Topologically, residues 1–22 (MGIGYGASDEQLEKQIGCVKYT) are cytoplasmic. A helical membrane pass occupies residues 23 to 43 (LFCFNIVAWMISTALFALTVW). Topologically, residues 44-61 (LRAEPGFNDWLRILEAQS) are extracellular. A helical membrane pass occupies residues 62–82 (FYIGVYVLIGISIVMMAVSFL). Over 83-91 (GCLSALMEN) the chain is Cytoplasmic. A helical membrane pass occupies residues 92–112 (TLALFVFVGTQVFGFIAIVAG). Residues 113 to 206 (SAVLLQFSTI…TWFFEGKTGW (94 aa)) are Extracellular-facing. Residues 207–227 (IVALAMTLGLLNVICAVMSFV) traverse the membrane as a helical segment. At 228–244 (LVQAVKKEEEQASNYRR) the chain is on the cytoplasmic side.

It belongs to the tetraspanin (TM4SF) family. In terms of assembly, forms a complex with Ssk and mesh.

It is found in the apicolateral cell membrane. The protein localises to the cell junction. Its subcellular location is the septate junction. Functionally, required for assembly of smooth septate junctions (sSJs), together with Ssk and mesh. Important for barrier function of the midgut epithelium. In Drosophila melanogaster (Fruit fly), this protein is Tetraspanin-2A.